The sequence spans 516 residues: Bifunctional purine biosynthesis protein PurH (516 aa).

The 146-residue stretch at M1 to T146 folds into the MGS-like domain.

It belongs to the PurH family.

The catalysed reaction is (6R)-10-formyltetrahydrofolate + 5-amino-1-(5-phospho-beta-D-ribosyl)imidazole-4-carboxamide = 5-formamido-1-(5-phospho-D-ribosyl)imidazole-4-carboxamide + (6S)-5,6,7,8-tetrahydrofolate. It catalyses the reaction IMP + H2O = 5-formamido-1-(5-phospho-D-ribosyl)imidazole-4-carboxamide. It functions in the pathway purine metabolism; IMP biosynthesis via de novo pathway; 5-formamido-1-(5-phospho-D-ribosyl)imidazole-4-carboxamide from 5-amino-1-(5-phospho-D-ribosyl)imidazole-4-carboxamide (10-formyl THF route): step 1/1. It participates in purine metabolism; IMP biosynthesis via de novo pathway; IMP from 5-formamido-1-(5-phospho-D-ribosyl)imidazole-4-carboxamide: step 1/1. This is Bifunctional purine biosynthesis protein PurH from Parasynechococcus marenigrum (strain WH8102).